The following is a 453-amino-acid chain: tRNA modification GTPase MnmE (453 aa).

Residues arginine 22, glutamate 79, and lysine 119 each coordinate (6S)-5-formyl-5,6,7,8-tetrahydrofolate. Residues glycine 215–glycine 376 enclose the TrmE-type G domain. A K(+)-binding site is contributed by asparagine 225. Residues asparagine 225–serine 230, threonine 244–threonine 250, aspartate 269–glycine 272, and asparagine 334–aspartate 337 each bind GTP. Position 229 (serine 229) interacts with Mg(2+). The K(+) site is built by threonine 244, isoleucine 246, and threonine 249. Threonine 250 lines the Mg(2+) pocket. Residue lysine 453 participates in (6S)-5-formyl-5,6,7,8-tetrahydrofolate binding.

It belongs to the TRAFAC class TrmE-Era-EngA-EngB-Septin-like GTPase superfamily. TrmE GTPase family. Homodimer. Heterotetramer of two MnmE and two MnmG subunits. Requires K(+) as cofactor.

It localises to the cytoplasm. Its function is as follows. Exhibits a very high intrinsic GTPase hydrolysis rate. Involved in the addition of a carboxymethylaminomethyl (cmnm) group at the wobble position (U34) of certain tRNAs, forming tRNA-cmnm(5)s(2)U34. The polypeptide is tRNA modification GTPase MnmE (Shewanella oneidensis (strain ATCC 700550 / JCM 31522 / CIP 106686 / LMG 19005 / NCIMB 14063 / MR-1)).